We begin with the raw amino-acid sequence, 262 residues long: Shikimate dehydrogenase (NADP(+)) (262 aa).

Residues 13–15 and threonine 59 each bind shikimate; that span reads SLS. Lysine 63 (proton acceptor) is an active-site residue. Aspartate 75 contacts NADP(+). Residues asparagine 84 and aspartate 99 each contribute to the shikimate site. NADP(+) is bound by residues 122–126, 144–149, and methionine 205; these read GAGGA and NRTLEK. Residue tyrosine 207 coordinates shikimate. Position 228 (glycine 228) interacts with NADP(+).

The protein belongs to the shikimate dehydrogenase family. As to quaternary structure, homodimer.

It catalyses the reaction shikimate + NADP(+) = 3-dehydroshikimate + NADPH + H(+). Its pathway is metabolic intermediate biosynthesis; chorismate biosynthesis; chorismate from D-erythrose 4-phosphate and phosphoenolpyruvate: step 4/7. Functionally, involved in the biosynthesis of the chorismate, which leads to the biosynthesis of aromatic amino acids. Catalyzes the reversible NADPH linked reduction of 3-dehydroshikimate (DHSA) to yield shikimate (SA). This Ignicoccus hospitalis (strain KIN4/I / DSM 18386 / JCM 14125) protein is Shikimate dehydrogenase (NADP(+)).